A 310-amino-acid polypeptide reads, in one-letter code: MAGNNFTEVTVFILSGFANHPELQVSLFLMFLFIYLFTVLGNLGLITLIRMDSQLHTPMYFFLSNLAFIDIFYSSTVTPKALVNFQSNRRSISFVGCFVQMYFFVGLVCCECFLLGSMAYNRYIAICNPLLYSVVMSQKVSNWLGVMPYVIGFTSSLISVWVISSLAFCDSSINHFFCDTTALLALSCVDTFGTEMVSFVLAGFTLLSSLLIITVTYIIIISAILRIQSAAGRQKAFSTCASHLMAVTIFYGSLIFTYLQPDNTSSLTQAQVASVFYTIVIPMLNPLIYSLRNKDVKNALLRVIHRKLFP.

The Extracellular portion of the chain corresponds to 1-25 (MAGNNFTEVTVFILSGFANHPELQV). A glycan (N-linked (GlcNAc...) asparagine) is linked at N5. Residues 26–46 (SLFLMFLFIYLFTVLGNLGLI) form a helical membrane-spanning segment. Residues 47–54 (TLIRMDSQ) are Cytoplasmic-facing. A helical transmembrane segment spans residues 55–75 (LHTPMYFFLSNLAFIDIFYSS). The Extracellular segment spans residues 76 to 99 (TVTPKALVNFQSNRRSISFVGCFV). Residues C97 and C188 are joined by a disulfide bond. The chain crosses the membrane as a helical span at residues 100–120 (QMYFFVGLVCCECFLLGSMAY). Topologically, residues 121-139 (NRYIAICNPLLYSVVMSQK) are cytoplasmic. A helical membrane pass occupies residues 140–160 (VSNWLGVMPYVIGFTSSLISV). Over 161–196 (WVISSLAFCDSSINHFFCDTTALLALSCVDTFGTEM) the chain is Extracellular. The helical transmembrane segment at 197–216 (VSFVLAGFTLLSSLLIITVT) threads the bilayer. The Cytoplasmic portion of the chain corresponds to 217-236 (YIIIISAILRIQSAAGRQKA). The helical transmembrane segment at 237–257 (FSTCASHLMAVTIFYGSLIFT) threads the bilayer. The Extracellular portion of the chain corresponds to 258-270 (YLQPDNTSSLTQA). The helical transmembrane segment at 271–291 (QVASVFYTIVIPMLNPLIYSL) threads the bilayer. Topologically, residues 292–310 (RNKDVKNALLRVIHRKLFP) are cytoplasmic.

It belongs to the G-protein coupled receptor 1 family.

It localises to the cell membrane. Its function is as follows. Odorant receptor. This is Olfactory receptor 8I2 (OR8I2) from Homo sapiens (Human).